We begin with the raw amino-acid sequence, 755 residues long: Tryptophan 2-monooxygenase (755 aa).

FMN is bound by residues Ser247, Glu267, Lys275, and Arg295. Arg295 serves as a coordination point for substrate.

This sequence belongs to the tryptophan 2-monooxygenase family. The cofactor is FMN.

The enzyme catalyses L-tryptophan + O2 = indole-3-acetamide + CO2 + H2O. Its pathway is plant hormone metabolism; auxin biosynthesis. This is Tryptophan 2-monooxygenase (tms1) from Agrobacterium tumefaciens (strain Ach5).